Reading from the N-terminus, the 325-residue chain is MQQFLRYNINVIKEDNDKNYGKYIVKPLEKGFGITLGNALRRVMLSHLPGSSVFALKIKGISHEFGFIPGVKEDVTQIILNIKNLVVWISDNMITDETLSETPIEKWPVMTIRANKAGIIKAGDIECPLGFEVFNKDLEICTLSEDAEVAIDIYATRGRGFKTAAENRSEIGSLSIIPIDSNFNPIIKVGYHVEEETSDVITDKLIIEVGTNGLIKSGDAIAIASKILSDHLKPLIDINKSLHDIQVLNEKNVEEKNKKLSIPIEQLDLTVRSYNCLKRHGIQTVEELVTRSKSEIENIRNLGKKSVREINKKLSELYDLKLKNN.

The interval 1–239 (MQQFLRYNIN…DHLKPLIDIN (239 aa)) is alpha N-terminal domain (alpha-NTD). Positions 255–325 (EKNKKLSIPI…ELYDLKLKNN (71 aa)) are alpha C-terminal domain (alpha-CTD).

Belongs to the RNA polymerase alpha chain family. Homodimer. The RNAP catalytic core consists of 2 alpha, 1 beta, 1 beta' and 1 omega subunit. When a sigma factor is associated with the core the holoenzyme is formed, which can initiate transcription.

It carries out the reaction RNA(n) + a ribonucleoside 5'-triphosphate = RNA(n+1) + diphosphate. DNA-dependent RNA polymerase catalyzes the transcription of DNA into RNA using the four ribonucleoside triphosphates as substrates. This chain is DNA-directed RNA polymerase subunit alpha, found in Mycoplasmoides gallisepticum (strain R(low / passage 15 / clone 2)) (Mycoplasma gallisepticum).